A 260-amino-acid polypeptide reads, in one-letter code: Carbonic anhydrase 3 (260 aa).

N-acetylalanine is present on A2. One can recognise an Alpha-carbonic anhydrase domain in the interval 3–259 (KEWGYADHNG…IKGRIVKASF (257 aa)). A phosphoserine mark is found at S29, S43, S50, and S55. The involved in proton transfer stretch occupies residues 64 to 67 (KTCR). T73 bears the Phosphothreonine mark. 3 residues coordinate Zn(2+): H94, H96, and H119. Y127 carries the post-translational modification Phosphotyrosine. T176 bears the Phosphothreonine mark. S-glutathionyl cysteine is present on residues C182 and C187. Position 198 to 199 (198 to 199 (TT)) interacts with substrate. The residue at position 216 (T216) is a Phosphothreonine. S219 carries the post-translational modification Phosphoserine.

This sequence belongs to the alpha-carbonic anhydrase family. Zn(2+) is required as a cofactor. In terms of processing, S-thiolated both by thiol-disulfide exchange with glutathione disulfide and by oxyradical-initiated S-thiolation with reduced glutathione. S-glutathionylated in hepatocytes under oxidative stress.

It is found in the cytoplasm. It catalyses the reaction hydrogencarbonate + H(+) = CO2 + H2O. Inhibited by acetazolamide. In terms of biological role, reversible hydration of carbon dioxide. This Sus scrofa (Pig) protein is Carbonic anhydrase 3.